Here is an 882-residue protein sequence, read N- to C-terminus: MVVTTSARGGGGDRTPSRRRGCGLAPAGAAALLAGASCLCYGRSLQGEFVHDDVWAIVNNPDVRPGAPLRWGIFTNDFWGKGMAENTSHKSYRPLCVLTFKLNIFLTGMNPFYFHAVNIILHCLVTLVLMYTCDKTVFKNRGLAFVTALLFAVHPIHTEAVAGIVGRADVLACLLFLLAFLSYNRSLDQGCVGGSFPSTVSPFFLLLSLFLGTCAMLVKETGITVFGVCLVYDLFSLSNKQDKSSNGALCPRSPQQPGSPQPSSLPGHPHRENGKQQRFPHKGAWGGCHSPLPPEPKSSGFPVSPRAVWSMMRFLTYSYLLAFNVWLLLAPVTLCYDWQVGSIPLVETIWDMRNLATIFLAVVMALLSLHCLAAFKRLEHKEVLVGLLFLVFPFIPASNLFFRVGFVVAERVLYMPSMGYCILFVHGLSKLCTWLNRCGATTLIVSTVLLLLLFSWKTVKQNEIWLSRESLFRSGVQTLPHNAKVHYNYANFLKDQGRNKEAIYHYRTALKLYPRHASALNNLGTLTRDTAEAKMYYQRALQLHPQHNRALFNLGNLLKSQEKKEEAITLLKDSIKYGPEFADAYSSLASLLAEQERFKEAEEIYQTGIKNCPDSSDLHNNYGVFLVDTGLPEKAVAHYQQAIKLSPSHHVAMVNLGRLYRSLGENSMAEEWYKRALQVAHKAEILSPLGALYYNTGRYEEALQIYQEAAALQPSQRELRLALAQVLAVMGQTKEAEKMTNHIVSEETGCLECYRLLSAIYSKQENHDKALDAIDKALQLKPKDPKVISELFFTKGNQLREQNLLDKAFESYRVAVQLNPDQAQAWMNMGGIQHIKGKYVSARAYYERALQLVPDSKLLKENLAKLDRLEKRLQEVREKDQT.

At M1 to R20 the chain is on the cytoplasmic side. Residues M1–R20 form a disordered region. The helical transmembrane segment at G21–Y41 threads the bilayer. Topologically, residues G42–N110 are extracellular. N86 is a glycosylation site (N-linked (GlcNAc...) asparagine). A helical transmembrane segment spans residues P111–Y131. The Cytoplasmic segment spans residues T132–V137. A helical transmembrane segment spans residues F138–H157. At T158–A160 the chain is on the extracellular side. A helical membrane pass occupies residues V161–L181. The Cytoplasmic segment spans residues S182–P197. Residues S198–V218 form a helical membrane-spanning segment. The Extracellular portion of the chain corresponds to K219–T221. The chain crosses the membrane as a helical span at residues G222–S238. The Cytoplasmic segment spans residues N239 to R313. The interval N246–Q277 is disordered. Residues P251–G267 show a composition bias toward low complexity. Residues F314–L334 form a helical membrane-spanning segment. The Extracellular portion of the chain corresponds to C335–N354. The chain crosses the membrane as a helical span at residues L355 to F375. At K376 to K381 the chain is on the cytoplasmic side. A helical transmembrane segment spans residues E382–F402. Position 403 (R403) is a topological domain, extracellular. The chain crosses the membrane as a helical span at residues V404–F424. The Cytoplasmic segment spans residues V425–C438. Residues G439–V459 traverse the membrane as a helical segment. Topologically, residues K460–T882 are extracellular. TPR repeat units lie at residues A483–H516, A517–H547, N548–F581, A582–S615, S616–H649, H650–K682, A683–Q716, L751–D784, S789–Q822, and A823–S856.

It belongs to the TMTC family. May interact with FAM168B.

The protein resides in the membrane. It localises to the endoplasmic reticulum. It carries out the reaction a di-trans,poly-cis-dolichyl beta-D-mannosyl phosphate + L-seryl-[protein] = 3-O-(alpha-D-mannosyl)-L-seryl-[protein] + a di-trans,poly-cis-dolichyl phosphate + H(+). It catalyses the reaction a di-trans,poly-cis-dolichyl beta-D-mannosyl phosphate + L-threonyl-[protein] = 3-O-(alpha-D-mannosyl)-L-threonyl-[protein] + a di-trans,poly-cis-dolichyl phosphate + H(+). It functions in the pathway protein modification; protein glycosylation. Transfers mannosyl residues to the hydroxyl group of serine or threonine residues. The 4 members of the TMTC family are O-mannosyl-transferases dedicated primarily to the cadherin superfamily, each member seems to have a distinct role in decorating the cadherin domains with O-linked mannose glycans at specific regions. Also acts as O-mannosyl-transferase on other proteins such as PDIA3. This chain is Protein O-mannosyl-transferase TMTC1, found in Homo sapiens (Human).